The following is a 96-amino-acid chain: Transcription and mRNA export factor ENY2 (96 aa).

The protein belongs to the ENY2 family. As to quaternary structure, component of the nuclear pore complex (NPC)-associated TREX-2 complex (transcription and export complex 2). Component of the SAGA transcription coactivator-HAT complex. Within the SAGA complex, participates in a subcomplex of SAGA called the DUB module (deubiquitination module).

It is found in the nucleus. Its subcellular location is the nucleoplasm. Involved in mRNA export coupled transcription activation by association with both the TREX-2 and the SAGA complexes. The transcription regulatory histone acetylation (HAT) complex SAGA is a multiprotein complex that activates transcription by remodeling chromatin and mediating histone acetylation and deubiquitination. Within the SAGA complex, participates in a subcomplex that specifically deubiquitinates histones. The SAGA complex is recruited to specific gene promoters by activators, where it is required for transcription. The TREX-2 complex functions in docking export-competent ribonucleoprotein particles (mRNPs) to the nuclear entrance of the nuclear pore complex (nuclear basket). TREX-2 participates in mRNA export and accurate chromatin positioning in the nucleus by tethering genes to the nuclear periphery. The protein is Transcription and mRNA export factor ENY2 of Taeniopygia guttata (Zebra finch).